Consider the following 335-residue polypeptide: Ubiquinone biosynthesis protein COQ4, mitochondrial (335 aa).

A mitochondrion-targeting transit peptide spans 1 to 10; it reads MLRLSLLRST. Residues histidine 210, aspartate 211, histidine 214, and glutamate 226 each contribute to the Zn(2+) site.

The protein belongs to the COQ4 family. Component of a multi-subunit COQ enzyme complex, composed of at least COQ3, COQ4, COQ5, COQ6, COQ7 and COQ9. Interacts with COQ3. Zn(2+) is required as a cofactor.

It is found in the mitochondrion inner membrane. The catalysed reaction is 4-hydroxy-3-methoxy-5-(all-trans-hexaprenyl)benzoate + H(+) = 2-methoxy-6-(all-trans-hexaprenyl)phenol + CO2. The protein operates within cofactor biosynthesis; ubiquinone biosynthesis. Functionally, lyase that catalyzes the C1-decarboxylation of 4-hydroxy-3-methoxy-5-(all-trans-hexaprenyl)benzoic acid into 2-methoxy-6-(all-trans-hexaprenyl)phenol during ubiquinone biosynthesis. This chain is Ubiquinone biosynthesis protein COQ4, mitochondrial, found in Saccharomyces cerevisiae (strain RM11-1a) (Baker's yeast).